The following is a 28-amino-acid chain: Humanin-like 2 (28 aa).

Belongs to the humanin family. As to expression, highly expressed in testis. Also expressed in kidney, heart, skeletal muscles and brain.

The protein resides in the secreted. The protein localises to the cytoplasm. In terms of biological role, plays a role as a neuroprotective and antiapoptotic factor. The polypeptide is Humanin-like 2 (Homo sapiens (Human)).